We begin with the raw amino-acid sequence, 379 residues long: Spermatogenesis-associated protein 17 (379 aa).

3 consecutive IQ domains span residues 48-77, 71-100, and 107-136; these read ENDA…VVTI, LNRV…AAYY, and YNEM…LKEY.

As to expression, strongly expressed in adult testis but weakly expressed in the spleen and thymus. Strongly expressed in round and elongating spermatids, and weakly or not expressed in spermatozoa.

The protein localises to the cytoplasm. The protein is Spermatogenesis-associated protein 17 (Spata17) of Mus musculus (Mouse).